The primary structure comprises 187 residues: Adenine phosphoribosyltransferase (187 aa).

It belongs to the purine/pyrimidine phosphoribosyltransferase family. In terms of assembly, homodimer.

It is found in the cytoplasm. It catalyses the reaction AMP + diphosphate = 5-phospho-alpha-D-ribose 1-diphosphate + adenine. Its pathway is purine metabolism; AMP biosynthesis via salvage pathway; AMP from adenine: step 1/1. Its function is as follows. Catalyzes a salvage reaction resulting in the formation of AMP, that is energically less costly than de novo synthesis. The chain is Adenine phosphoribosyltransferase from Burkholderia pseudomallei (strain 1106a).